The chain runs to 331 residues: Mitochondrial respiration co-chaperone MRJ1 (331 aa).

The N-terminal 36 residues, 1–36 (MLSFQATVRPLAVSSRLHSPAAHIWRRNAHTAAMSD), are a transit peptide targeting the mitochondrion. The disordered stretch occupies residues 35-66 (SDDSLDQGSSSSYGDSASQPHLGKGKGRQDSL). Residues 40 to 53 (DQGSSSSYGDSASQ) are compositionally biased toward low complexity. The J domain maps to 83 to 147 (DPFEVMALDR…SSRSAFLKTG (65 aa)). Residues 203–226 (DGSQGWRPYEDPSKGFSPPTSGPA) are disordered. In terms of domain architecture, IQ spans 275–303 (RALAQARYEAATHGHIRREQIRRRVREAE).

This sequence belongs to the DnaJ family. Interacts with QCR2.

Its subcellular location is the mitochondrion. In terms of biological role, mitochondrial co-chaperone required for ubiquinol-cytochrome c oxidoreductase (mitochondrial respiratory chain complex III) activity. In Cryptococcus neoformans var. grubii serotype A (strain H99 / ATCC 208821 / CBS 10515 / FGSC 9487) (Filobasidiella neoformans var. grubii), this protein is Mitochondrial respiration co-chaperone MRJ1.